Reading from the N-terminus, the 322-residue chain is tRNA U34 carboxymethyltransferase (322 aa).

Carboxy-S-adenosyl-L-methionine is bound by residues K90, W104, K109, G129, D151 to T153, M179 to E180, M195, Y199, and R314.

This sequence belongs to the class I-like SAM-binding methyltransferase superfamily. CmoB family. Homotetramer.

It catalyses the reaction carboxy-S-adenosyl-L-methionine + 5-hydroxyuridine(34) in tRNA = 5-carboxymethoxyuridine(34) in tRNA + S-adenosyl-L-homocysteine + H(+). Its function is as follows. Catalyzes carboxymethyl transfer from carboxy-S-adenosyl-L-methionine (Cx-SAM) to 5-hydroxyuridine (ho5U) to form 5-carboxymethoxyuridine (cmo5U) at position 34 in tRNAs. This chain is tRNA U34 carboxymethyltransferase, found in Alcanivorax borkumensis (strain ATCC 700651 / DSM 11573 / NCIMB 13689 / SK2).